The chain runs to 147 residues: Large ribosomal subunit protein bL9 (147 aa).

Belongs to the bacterial ribosomal protein bL9 family.

Binds to the 23S rRNA. The chain is Large ribosomal subunit protein bL9 from Thermodesulfovibrio yellowstonii (strain ATCC 51303 / DSM 11347 / YP87).